The chain runs to 306 residues: MSTLGHQYDNSLVSNAFGFLRLPMNFMPYESDADWVITGVPFDMATSGRAGGRHGPAAIRQVSTNLAWEHNRFPWNFDMRERLNVVDCGDLVYAFGDAREMSEKLQAHAEKLLAAGKRMLSFGGDHFVTLPLLRAHAKHFGKMALVHFDAHTDTYANGCEFDHGTMFYTAPNEGLIDPNHSVQIGIRTEFDKDNGFTVLDAGQVNDRSVDDVIAQVKQIVGDMPVYLTFDIDCLDPAFAPGTGTPVIGGLTSDRAIKLVRGLKDLNIVGMDVVEVAPAYDQSEITALAAATLALEMLYIQAAKKGE.

Mn(2+) contacts are provided by His126, Asp149, His151, Asp153, Asp230, and Asp232.

Belongs to the arginase family. Agmatinase subfamily. The cofactor is Mn(2+).

The enzyme catalyses agmatine + H2O = urea + putrescine. It functions in the pathway amine and polyamine biosynthesis; putrescine biosynthesis via agmatine pathway; putrescine from agmatine: step 1/1. In terms of biological role, catalyzes the formation of putrescine from agmatine. The polypeptide is Agmatinase (Klebsiella pneumoniae (strain 342)).